A 335-amino-acid polypeptide reads, in one-letter code: Phosphate acyltransferase (335 aa).

This sequence belongs to the PlsX family. In terms of assembly, homodimer. Probably interacts with PlsY.

It localises to the cytoplasm. It carries out the reaction a fatty acyl-[ACP] + phosphate = an acyl phosphate + holo-[ACP]. Its pathway is lipid metabolism; phospholipid metabolism. Functionally, catalyzes the reversible formation of acyl-phosphate (acyl-PO(4)) from acyl-[acyl-carrier-protein] (acyl-ACP). This enzyme utilizes acyl-ACP as fatty acyl donor, but not acyl-CoA. This is Phosphate acyltransferase from Leptospira interrogans serogroup Icterohaemorrhagiae serovar copenhageni (strain Fiocruz L1-130).